We begin with the raw amino-acid sequence, 510 residues long: Serine/threonine protein phosphatase 2A 59 kDa regulatory subunit B' eta isoform (510 aa).

Residues 1–87 (MWKQILSKLP…NNNNNNNNGV (87 aa)) are disordered. Residues 10-19 (PNKKSSKHEH) are compositionally biased toward basic residues. Positions 27-42 (HSSSSSHTSGASTSKS) are enriched in low complexity.

The protein belongs to the phosphatase 2A regulatory subunit B56 family. PP2A consists of a common heteromeric enzyme, composed of a catalytic subunit (subunits C), a constant regulatory subunit (subunit A), and a variety of regulatory subunits such as subunits B (the R2/B/PR55/B55, R3/B''/PR72/PR130/PR59 and R5/B'/B56 families). Interacts with BZR1. Interacts with BRI1.

It is found in the nucleus. The protein localises to the nucleolus. Its subcellular location is the cytoplasm. In terms of biological role, the B regulatory subunit may modulate substrate selectivity and catalytic activity, and may also direct the localization of the catalytic enzyme to a particular subcellular compartment. The holoenzyme composed of PP2AA1, PP2A4 and B'ETA acts as negative regulator of plant innate immunity by controlling BAK1 phosphorylation state and activation in surface-localized immune receptor complexes. Required for the formation of the PP2A holoenzyme that negatively regulates brassinosteroid signaling by dephosphorylating and inactivating BRI1 in the cytoplasm. This is Serine/threonine protein phosphatase 2A 59 kDa regulatory subunit B' eta isoform (B'ETA) from Arabidopsis thaliana (Mouse-ear cress).